Consider the following 262-residue polypeptide: Phosphatidylserine decarboxylase proenzyme (262 aa).

Catalysis depends on charge relay system; for autoendoproteolytic cleavage activity residues D86, H142, and S226. The active-site Schiff-base intermediate with substrate; via pyruvic acid; for decarboxylase activity is S226. S226 is subject to Pyruvic acid (Ser); by autocatalysis.

Belongs to the phosphatidylserine decarboxylase family. PSD-B subfamily. Prokaryotic type I sub-subfamily. As to quaternary structure, heterodimer of a large membrane-associated beta subunit and a small pyruvoyl-containing alpha subunit. It depends on pyruvate as a cofactor. Is synthesized initially as an inactive proenzyme. Formation of the active enzyme involves a self-maturation process in which the active site pyruvoyl group is generated from an internal serine residue via an autocatalytic post-translational modification. Two non-identical subunits are generated from the proenzyme in this reaction, and the pyruvate is formed at the N-terminus of the alpha chain, which is derived from the carboxyl end of the proenzyme. The autoendoproteolytic cleavage occurs by a canonical serine protease mechanism, in which the side chain hydroxyl group of the serine supplies its oxygen atom to form the C-terminus of the beta chain, while the remainder of the serine residue undergoes an oxidative deamination to produce ammonia and the pyruvoyl prosthetic group on the alpha chain. During this reaction, the Ser that is part of the protease active site of the proenzyme becomes the pyruvoyl prosthetic group, which constitutes an essential element of the active site of the mature decarboxylase.

The protein localises to the cell membrane. The catalysed reaction is a 1,2-diacyl-sn-glycero-3-phospho-L-serine + H(+) = a 1,2-diacyl-sn-glycero-3-phosphoethanolamine + CO2. Its pathway is phospholipid metabolism; phosphatidylethanolamine biosynthesis; phosphatidylethanolamine from CDP-diacylglycerol: step 2/2. Its function is as follows. Catalyzes the formation of phosphatidylethanolamine (PtdEtn) from phosphatidylserine (PtdSer). In Bacillus cereus (strain ATCC 10987 / NRS 248), this protein is Phosphatidylserine decarboxylase proenzyme.